Consider the following 210-residue polypeptide: Ribonuclease HII (210 aa).

The region spanning 17-206 (DIICGVDEAG…VRALLGGVTP (190 aa)) is the RNase H type-2 domain. The a divalent metal cation site is built by Asp23, Glu24, and Asp115.

It belongs to the RNase HII family. Requires Mn(2+) as cofactor. Mg(2+) is required as a cofactor.

It localises to the cytoplasm. It carries out the reaction Endonucleolytic cleavage to 5'-phosphomonoester.. Endonuclease that specifically degrades the RNA of RNA-DNA hybrids. The chain is Ribonuclease HII from Janthinobacterium sp. (strain Marseille) (Minibacterium massiliensis).